Reading from the N-terminus, the 692-residue chain is Elongation factor G (692 aa).

One can recognise a tr-type G domain in the interval 8–282 (ERTRNIGIMA…AIVYYLPSPV (275 aa)). GTP is bound by residues 17–24 (AHIDAGKT), 81–85 (DTPGH), and 135–138 (NKMD).

It belongs to the TRAFAC class translation factor GTPase superfamily. Classic translation factor GTPase family. EF-G/EF-2 subfamily.

The protein localises to the cytoplasm. Its function is as follows. Catalyzes the GTP-dependent ribosomal translocation step during translation elongation. During this step, the ribosome changes from the pre-translocational (PRE) to the post-translocational (POST) state as the newly formed A-site-bound peptidyl-tRNA and P-site-bound deacylated tRNA move to the P and E sites, respectively. Catalyzes the coordinated movement of the two tRNA molecules, the mRNA and conformational changes in the ribosome. The chain is Elongation factor G from Carboxydothermus hydrogenoformans (strain ATCC BAA-161 / DSM 6008 / Z-2901).